The chain runs to 124 residues: MSANQDITLTEGEGSRPAGDKGKGKAVGSEDIPMEQYSGDSETEESDAADDETFPEDDIEEEEEAGDDNLERISEENIIPGGRRTRGKVINFAEAAEKVEADDAMDDDDDEEYKQRDEDDEMQG.

Residues 1-124 form a disordered region; that stretch reads MSANQDITLT…QRDEDDEMQG (124 aa). 2 stretches are compositionally biased toward acidic residues: residues 41 to 68 and 102 to 124; these read SETE…AGDD and DDAM…EMQG.

It belongs to the CHZ1 family. Forms a heterotrimer with H2A.Z-H2B, stabilizing the association of the histone dimer. Also, with a lower affinity, forms a heterotrimer with H2A-H2B.

The protein localises to the nucleus. Functionally, forms a chaperone-bound H2A.Z-H2B complex that acts as a source for SWR1 complex-dependent H2A to H2A.Z histone replacement in chromatin. The polypeptide is Histone H2A.Z-specific chaperone CHZ1 (CHZ1) (Coccidioides immitis (strain RS) (Valley fever fungus)).